The primary structure comprises 125 residues: Large ribosomal subunit protein bL12 (125 aa).

Residues 96 to 125 form a disordered region; it reads PAPVKEGATKDEAEEIKKKIEEAGGTAELK. Residues 102 to 117 show a composition bias toward basic and acidic residues; sequence GATKDEAEEIKKKIEE.

Belongs to the bacterial ribosomal protein bL12 family. Homodimer. Part of the ribosomal stalk of the 50S ribosomal subunit. Forms a multimeric L10(L12)X complex, where L10 forms an elongated spine to which 2 to 4 L12 dimers bind in a sequential fashion. Binds GTP-bound translation factors.

Its function is as follows. Forms part of the ribosomal stalk which helps the ribosome interact with GTP-bound translation factors. Is thus essential for accurate translation. In Alcanivorax borkumensis (strain ATCC 700651 / DSM 11573 / NCIMB 13689 / SK2), this protein is Large ribosomal subunit protein bL12.